We begin with the raw amino-acid sequence, 288 residues long: NAD kinase (288 aa).

The Proton acceptor role is filled by Asp-73. Residues 73 to 74, Arg-78, 144 to 145, Asp-174, 185 to 190, and Ala-209 each bind NAD(+); these read DG, NE, and TAYSLS.

It belongs to the NAD kinase family. The cofactor is a divalent metal cation.

It localises to the cytoplasm. It catalyses the reaction NAD(+) + ATP = ADP + NADP(+) + H(+). Its function is as follows. Involved in the regulation of the intracellular balance of NAD and NADP, and is a key enzyme in the biosynthesis of NADP. Catalyzes specifically the phosphorylation on 2'-hydroxyl of the adenosine moiety of NAD to yield NADP. The polypeptide is NAD kinase (Porphyromonas gingivalis (strain ATCC BAA-308 / W83)).